We begin with the raw amino-acid sequence, 142 residues long: GAFIMPGTLWCGAGNAASDYSQLGTEKDTDMCCRDHDHCSDTMAALEYKHGMRNYRPHTVSHCDCDNQFRSCLMNVKDRTADLVGMTYFTVLKISCFELEEGEGCVDNNFSQQCTKSEIMPVAKLVSAAPYQAQAETQSGEG.

Residues Trp10, Gly12, and Gly14 each contribute to the Ca(2+) site. 3 disulfides stabilise this stretch: Cys11–Cys33, Cys32–Cys72, and Cys39–Cys65. His36 is an active-site residue. Asp37 is a Ca(2+) binding site.

This sequence belongs to the phospholipase A2 family. Group III subfamily. Ca(2+) is required as a cofactor. Expressed by the venom gland.

It is found in the secreted. The enzyme catalyses a 1,2-diacyl-sn-glycero-3-phosphocholine + H2O = a 1-acyl-sn-glycero-3-phosphocholine + a fatty acid + H(+). PLA2 catalyzes the calcium-dependent hydrolysis of the 2-acyl groups in 3-sn-phosphoglycerides. This is Acidic phospholipase A2 PA4 from Heloderma suspectum (Gila monster).